Reading from the N-terminus, the 523-residue chain is Bifunctional purine biosynthesis protein PurH (523 aa).

The region spanning 4–152 (DHIRRPIRRA…KNHPSVAVVT (149 aa)) is the MGS-like domain.

It belongs to the PurH family.

The catalysed reaction is (6R)-10-formyltetrahydrofolate + 5-amino-1-(5-phospho-beta-D-ribosyl)imidazole-4-carboxamide = 5-formamido-1-(5-phospho-D-ribosyl)imidazole-4-carboxamide + (6S)-5,6,7,8-tetrahydrofolate. The enzyme catalyses IMP + H2O = 5-formamido-1-(5-phospho-D-ribosyl)imidazole-4-carboxamide. It participates in purine metabolism; IMP biosynthesis via de novo pathway; 5-formamido-1-(5-phospho-D-ribosyl)imidazole-4-carboxamide from 5-amino-1-(5-phospho-D-ribosyl)imidazole-4-carboxamide (10-formyl THF route): step 1/1. It functions in the pathway purine metabolism; IMP biosynthesis via de novo pathway; IMP from 5-formamido-1-(5-phospho-D-ribosyl)imidazole-4-carboxamide: step 1/1. This chain is Bifunctional purine biosynthesis protein PurH, found in Mycobacterium ulcerans (strain Agy99).